A 372-amino-acid polypeptide reads, in one-letter code: GTPase Obg (372 aa).

An Obg domain is found at 1–159; sequence MAFVDEAKFF…KWLLIELKLM (159 aa). A disordered region spans residues 121–141; sequence GSGGMGNPHFSSGSNRTPRVA. The OBG-type G domain maps to 160–329; it reads ADVGLVGLPN…LVKLIGDIID (170 aa). GTP is bound by residues 166–173, 191–195, 213–216, 280–283, and 310–312; these read GLPNAGKS, FTTLE, DIPG, NKCD, and SAI. 2 residues coordinate Mg(2+): Ser-173 and Thr-193. Residues 346–372 are disordered; the sequence is QDLKKQKEEERRQELKKQKEEEQAKDE.

The protein belongs to the TRAFAC class OBG-HflX-like GTPase superfamily. OBG GTPase family. In terms of assembly, monomer. The cofactor is Mg(2+).

The protein localises to the cytoplasm. An essential GTPase which binds GTP, GDP and possibly (p)ppGpp with moderate affinity, with high nucleotide exchange rates and a fairly low GTP hydrolysis rate. Plays a role in control of the cell cycle, stress response, ribosome biogenesis and in those bacteria that undergo differentiation, in morphogenesis control. This is GTPase Obg from Desulfotalea psychrophila (strain LSv54 / DSM 12343).